The following is a 122-amino-acid chain: Bet1-like SNARE 1-1 (122 aa).

Over 1-103 (MNPRREPRGG…VFETKSSRRM (103 aa)) the chain is Cytoplasmic. In terms of domain architecture, t-SNARE coiled-coil homology spans 32-94 (EINEHENERA…SGTMDRFKTV (63 aa)). Residue S56 is modified to Phosphoserine. The helical; Anchor for type IV membrane protein transmembrane segment at 104 to 121 (LTLVASFVGLFLVIYYLT) threads the bilayer. Position 122 (R122) is a topological domain, vesicular.

It belongs to the BET1 family.

The protein localises to the golgi apparatus membrane. The protein resides in the endoplasmic reticulum membrane. In terms of biological role, required for vesicular transport from the ER to the Golgi complex. Functions as a SNARE associated with ER-derived vesicles. This Arabidopsis thaliana (Mouse-ear cress) protein is Bet1-like SNARE 1-1 (BET11).